The following is a 180-amino-acid chain: ATP synthase subunit b (180 aa).

Residues 26–46 (IPLMLATLAALVISIFFLTYF) form a helical membrane-spanning segment.

Belongs to the ATPase B chain family. F-type ATPases have 2 components, F(1) - the catalytic core - and F(0) - the membrane proton channel. F(1) has five subunits: alpha(3), beta(3), gamma(1), delta(1), epsilon(1). F(0) has three main subunits: a(1), b(2) and c(10-14). The alpha and beta chains form an alternating ring which encloses part of the gamma chain. F(1) is attached to F(0) by a central stalk formed by the gamma and epsilon chains, while a peripheral stalk is formed by the delta and b chains.

It is found in the cell membrane. Its function is as follows. F(1)F(0) ATP synthase produces ATP from ADP in the presence of a proton or sodium gradient. F-type ATPases consist of two structural domains, F(1) containing the extramembraneous catalytic core and F(0) containing the membrane proton channel, linked together by a central stalk and a peripheral stalk. During catalysis, ATP synthesis in the catalytic domain of F(1) is coupled via a rotary mechanism of the central stalk subunits to proton translocation. Functionally, component of the F(0) channel, it forms part of the peripheral stalk, linking F(1) to F(0). This chain is ATP synthase subunit b, found in Mycoplasmopsis pulmonis (strain UAB CTIP) (Mycoplasma pulmonis).